The chain runs to 341 residues: L-threonine 3-dehydrogenase (341 aa).

C38 serves as a coordination point for Zn(2+). Residues T40 and H43 each act as charge relay system in the active site. Zn(2+)-binding residues include H63, E64, C93, C96, C99, and C107. NAD(+) contacts are provided by residues I175, D195, R200, L262–I264, and I286–Y287.

This sequence belongs to the zinc-containing alcohol dehydrogenase family. As to quaternary structure, homotetramer. Zn(2+) serves as cofactor.

It localises to the cytoplasm. It catalyses the reaction L-threonine + NAD(+) = (2S)-2-amino-3-oxobutanoate + NADH + H(+). The protein operates within amino-acid degradation; L-threonine degradation via oxydo-reductase pathway; glycine from L-threonine: step 1/2. In terms of biological role, catalyzes the NAD(+)-dependent oxidation of L-threonine to 2-amino-3-ketobutyrate. The polypeptide is L-threonine 3-dehydrogenase (Marinomonas sp. (strain MWYL1)).